The sequence spans 218 residues: Probable GTP-binding protein EngB (218 aa).

An EngB-type G domain is found at 31 to 205 (SGIEIAFAGR…EQKVTSWYAQ (175 aa)). GTP contacts are provided by residues 39 to 46 (GRSNAGKS), 66 to 70 (GRTQL), 84 to 87 (DLPG), 151 to 154 (TKAD), and 184 to 186 (FSS). Ser46 and Thr68 together coordinate Mg(2+).

This sequence belongs to the TRAFAC class TrmE-Era-EngA-EngB-Septin-like GTPase superfamily. EngB GTPase family. Mg(2+) serves as cofactor.

Necessary for normal cell division and for the maintenance of normal septation. In Psychromonas ingrahamii (strain DSM 17664 / CCUG 51855 / 37), this protein is Probable GTP-binding protein EngB.